Reading from the N-terminus, the 391-residue chain is Pyridinium-3,5-bisthiocarboxylic acid mononucleotide nickel insertion protein (391 aa).

Belongs to the LarC family.

It carries out the reaction Ni(II)-pyridinium-3,5-bisthiocarboxylate mononucleotide = pyridinium-3,5-bisthiocarboxylate mononucleotide + Ni(2+). Its function is as follows. Involved in the biosynthesis of a nickel-pincer cofactor ((SCS)Ni(II) pincer complex). Binds Ni(2+), and functions in nickel delivery to pyridinium-3,5-bisthiocarboxylic acid mononucleotide (P2TMN), to form the mature cofactor. Is thus probably required for the activation of nickel-pincer cofactor-dependent enzymes. This Staphylococcus saprophyticus subsp. saprophyticus (strain ATCC 15305 / DSM 20229 / NCIMB 8711 / NCTC 7292 / S-41) protein is Pyridinium-3,5-bisthiocarboxylic acid mononucleotide nickel insertion protein.